The following is a 615-amino-acid chain: DNA mismatch repair protein MutL (615 aa).

A disordered region spans residues 362–397 (HFAEPAVREPVAPRYSPAPASGSRPAASWPNAQPGY). Residues 373–391 (APRYSPAPASGSRPAASWP) are compositionally biased toward low complexity.

Belongs to the DNA mismatch repair MutL/HexB family.

In terms of biological role, this protein is involved in the repair of mismatches in DNA. It is required for dam-dependent methyl-directed DNA mismatch repair. May act as a 'molecular matchmaker', a protein that promotes the formation of a stable complex between two or more DNA-binding proteins in an ATP-dependent manner without itself being part of a final effector complex. The polypeptide is DNA mismatch repair protein MutL (Escherichia coli O6:H1 (strain CFT073 / ATCC 700928 / UPEC)).